The primary structure comprises 117 residues: Acidic phospholipase A2 (117 aa).

7 cysteine pairs are disulfide-bonded: cysteine 11-cysteine 70, cysteine 25-cysteine 116, cysteine 27-cysteine 43, cysteine 42-cysteine 98, cysteine 49-cysteine 91, cysteine 59-cysteine 84, and cysteine 77-cysteine 89. Ca(2+)-binding residues include tyrosine 26, glycine 28, and glycine 30. Histidine 46 is an active-site residue. Ca(2+) is bound at residue aspartate 47. Asparagine 80 carries an N-linked (GlcNAc...) asparagine glycan. Aspartate 92 is an active-site residue.

Ca(2+) serves as cofactor. Expressed by the venom gland.

The protein resides in the secreted. The catalysed reaction is a 1,2-diacyl-sn-glycero-3-phosphocholine + H2O = a 1-acyl-sn-glycero-3-phosphocholine + a fatty acid + H(+). Snake venom phospholipase A2 (PLA2) that shows strong myotoxicity and induces edema in mice. Shows no cytotoxicity in vitro. Has a strong anticoagulant effect in vitro. PLA2 catalyzes the calcium-dependent hydrolysis of the 2-acyl groups in 3-sn-phosphoglycerides. This is Acidic phospholipase A2 from Micrurus dumerilii (Coral snake).